We begin with the raw amino-acid sequence, 86 residues long: Small ribosomal subunit protein bS18c (86 aa).

Belongs to the bacterial ribosomal protein bS18 family. In terms of assembly, part of the 30S ribosomal subunit.

The protein localises to the plastid. It is found in the chloroplast. This is Small ribosomal subunit protein bS18c from Pseudotsuga menziesii (Douglas-fir).